Here is a 338-residue protein sequence, read N- to C-terminus: Tryptophan--tRNA ligase (338 aa).

ATP-binding positions include 11–13 (QPS) and 19–20 (GN). The 'HIGH' region signature appears at 12–20 (PSGELSIGN). Asp135 is a binding site for L-tryptophan. Residues 147-149 (GSD), Val189, and 198-202 (KMSKS) contribute to the ATP site. Residues 198 to 202 (KMSKS) carry the 'KMSKS' region motif.

The protein belongs to the class-I aminoacyl-tRNA synthetase family. Homodimer.

The protein resides in the cytoplasm. It catalyses the reaction tRNA(Trp) + L-tryptophan + ATP = L-tryptophyl-tRNA(Trp) + AMP + diphosphate + H(+). Its function is as follows. Catalyzes the attachment of tryptophan to tRNA(Trp). The polypeptide is Tryptophan--tRNA ligase (Aliivibrio fischeri (strain ATCC 700601 / ES114) (Vibrio fischeri)).